A 165-amino-acid polypeptide reads, in one-letter code: Growth arrest and DNA damage-inducible protein GADD45 alpha (165 aa).

Threonine 2 carries the phosphothreonine modification.

This sequence belongs to the GADD45 family. In terms of assembly, interacts with MAPK14. Predominantly monomeric but also forms dimers and other oligomers as concentration increases. Interacts with GADD45GIP1. Interacts weakly with PCNA. Interacts with AURKA, likely to compete with dimerization.

The protein resides in the nucleus. Its function is as follows. In T-cells, functions as a regulator of p38 MAPKs by inhibiting p88 phosphorylation and activity. Might affect PCNA interaction with some CDK (cell division protein kinase) complexes; stimulates DNA excision repair in vitro and inhibits entry of cells into S phase. The polypeptide is Growth arrest and DNA damage-inducible protein GADD45 alpha (GADD45A) (Homo sapiens (Human)).